The following is a 148-amino-acid chain: Single-stranded DNA-binding protein 2 (148 aa).

The SSB domain maps to 4–109 (INSVIIAGNL…IKARRIQFLN (106 aa)).

Homotetramer.

The protein is Single-stranded DNA-binding protein 2 (ssb2) of Chlorobaculum tepidum (strain ATCC 49652 / DSM 12025 / NBRC 103806 / TLS) (Chlorobium tepidum).